The sequence spans 473 residues: Argininosuccinate lyase (473 aa).

The protein belongs to the lyase 1 family. Argininosuccinate lyase subfamily.

Its subcellular location is the cytoplasm. The catalysed reaction is 2-(N(omega)-L-arginino)succinate = fumarate + L-arginine. It participates in amino-acid biosynthesis; L-arginine biosynthesis; L-arginine from L-ornithine and carbamoyl phosphate: step 3/3. The protein is Argininosuccinate lyase of Mycobacteroides abscessus (strain ATCC 19977 / DSM 44196 / CCUG 20993 / CIP 104536 / JCM 13569 / NCTC 13031 / TMC 1543 / L948) (Mycobacterium abscessus).